The following is a 427-amino-acid chain: Adenylosuccinate synthetase (427 aa).

GTP contacts are provided by residues 12-18 and 40-42; these read GDEGKGK and GHT. Residue Asp-13 is the Proton acceptor of the active site. Asp-13 and Gly-40 together coordinate Mg(2+). IMP is bound by residues 13 to 16, 38 to 41, Thr-128, Arg-142, Gln-223, Thr-238, and Arg-302; these read DEGK and NAGH. His-41 serves as the catalytic Proton donor. 298-304 is a substrate binding site; the sequence is TTTGRPR. GTP-binding positions include Arg-304, 330-332, and 412-414; these read SID and SVG.

It belongs to the adenylosuccinate synthetase family. As to quaternary structure, homodimer. Mg(2+) serves as cofactor.

Its subcellular location is the cytoplasm. The enzyme catalyses IMP + L-aspartate + GTP = N(6)-(1,2-dicarboxyethyl)-AMP + GDP + phosphate + 2 H(+). The protein operates within purine metabolism; AMP biosynthesis via de novo pathway; AMP from IMP: step 1/2. In terms of biological role, plays an important role in the de novo pathway of purine nucleotide biosynthesis. Catalyzes the first committed step in the biosynthesis of AMP from IMP. The sequence is that of Adenylosuccinate synthetase from Staphylococcus saprophyticus subsp. saprophyticus (strain ATCC 15305 / DSM 20229 / NCIMB 8711 / NCTC 7292 / S-41).